The following is a 151-amino-acid chain: Ribonuclease P protein component (151 aa).

A disordered region spans residues 1 to 62; the sequence is MDEKDLATQP…LKGDSAFRRL (62 aa). The segment covering 28–48 has biased composition (low complexity); the sequence is GAQGAEAQAAEGPLAAHAQGA.

This sequence belongs to the RnpA family. In terms of assembly, consists of a catalytic RNA component (M1 or rnpB) and a protein subunit.

The catalysed reaction is Endonucleolytic cleavage of RNA, removing 5'-extranucleotides from tRNA precursor.. In terms of biological role, RNaseP catalyzes the removal of the 5'-leader sequence from pre-tRNA to produce the mature 5'-terminus. It can also cleave other RNA substrates such as 4.5S RNA. The protein component plays an auxiliary but essential role in vivo by binding to the 5'-leader sequence and broadening the substrate specificity of the ribozyme. This chain is Ribonuclease P protein component, found in Thermus oshimai.